The chain runs to 460 residues: Mercuric reductase (460 aa).

The 65-residue stretch at 1–65 folds into the HMA domain; that stretch reads MTHLKITGMT…AVAGLGYKAM (65 aa). A metal cation-binding residues include cysteine 11 and cysteine 14. FAD contacts are provided by alanine 110, glycine 130, and threonine 135. Cysteine 136 and cysteine 141 form a disulfide bridge. Positions 145 and 211 each coordinate FAD. Hg(2+) is bound by residues cysteine 457 and cysteine 458.

The protein belongs to the class-I pyridine nucleotide-disulfide oxidoreductase family. As to quaternary structure, homodimer. FAD is required as a cofactor.

It catalyses the reaction Hg + NADP(+) + H(+) = Hg(2+) + NADPH. Resistance to Hg(2+) in bacteria appears to be governed by a specialized system which includes mercuric reductase. MerA protein is responsible for volatilizing mercury as Hg(0). The polypeptide is Mercuric reductase (merA) (Serratia marcescens).